We begin with the raw amino-acid sequence, 254 residues long: Membrane protein US20 (254 aa).

7 consecutive transmembrane segments (helical) span residues 31-51, 62-82, 89-109, 114-134, 143-163, 178-198, and 208-228; these read AIFI…WLGF, YSFF…YTLG, ATVL…FQMC, VLVG…GLAF, WKCI…LALL, AFSI…VIFF, and AVCL…MLSG.

The protein localises to the host membrane. In Homo sapiens (Human), this protein is Membrane protein US20 (US20).